The following is a 290-amino-acid chain: MFLNSILVVITDLAAGLLGNTSFRRHFHLLLSALLLFGPLLSLWVSHYSVFAKRTHFLYRVFLRSGWGWTCIFVGSFVFVLSFSVRRSLTLSLRHLSRLAVAGGLWLGFRKLLCLLENATGSCYEPLSAALEMTSGTNGEGQPLLLLREAETKETCVRSGMLWRGYEVSEDALLLCLCCLLLAEETAVFGPYLNLGGPSEAPLRILFLFCVLLLSLWVFLLLCLLAYFPEFPTQLLGGALGCLSWRALYQGWYRLRPSWYCPGRPGVGLLSTQSKQDELLETQTNAKEID.

Transmembrane regions (helical) follow at residues 1-21 (MFLN…LGNT), 26-46 (HFHL…LWVS), 65-85 (SGWG…SFSV), 173-193 (LLLC…GPYL), and 205-225 (ILFL…LCLL).

This sequence belongs to the FIT family. FIT1 subfamily.

It localises to the endoplasmic reticulum membrane. Its function is as follows. May play an important role in the formation of lipid droplets (LDs) which are storage organelles at the center of lipid and energy homeostasis. May directly bind to diacylglycerol (DAGs) and triacylglycerol. In Danio rerio (Zebrafish), this protein is Fat storage-inducing transmembrane protein 1 (fitm1l).